The sequence spans 198 residues: Small ribosomal subunit protein uS2 (198 aa).

It belongs to the universal ribosomal protein uS2 family.

The sequence is that of Small ribosomal subunit protein uS2 (rps2) from Methanothermobacter thermautotrophicus (strain ATCC 29096 / DSM 1053 / JCM 10044 / NBRC 100330 / Delta H) (Methanobacterium thermoautotrophicum).